The chain runs to 210 residues: uncharacterized protein (210 aa).

Residues serine 18, serine 39, serine 41, serine 57, and serine 60 each carry the phosphoserine modification. The segment covering 33-46 (LDLDQRSMSPSNIA) has biased composition (polar residues). The interval 33-58 (LDLDQRSMSPSNIASGEDRITRTNSG) is disordered. Disordered regions lie at residues 100 to 139 (YDHN…YKVS) and 177 to 210 (DSAP…NVHT). The segment covering 102–116 (HNNGTKSPTPKTSNM) has biased composition (polar residues). Residues 130–139 (NDKDDKYKVS) are compositionally biased toward basic and acidic residues. A phosphoserine mark is found at serine 178, serine 189, and serine 192. A compositionally biased stretch (polar residues) spans 191–210 (HSPSLNSMDNTTKHSSNVHT).

This is an uncharacterized protein from Saccharomyces cerevisiae (strain ATCC 204508 / S288c) (Baker's yeast).